The primary structure comprises 88 residues: Small ribosomal subunit protein bS20 (88 aa).

The segment at 1–21 (MANTTSAKKATRKIARRTAVN) is disordered.

The protein belongs to the bacterial ribosomal protein bS20 family.

Binds directly to 16S ribosomal RNA. This chain is Small ribosomal subunit protein bS20, found in Sinorhizobium fredii (strain NBRC 101917 / NGR234).